The chain runs to 137 residues: Ribosomal RNA large subunit methyltransferase H (137 aa).

Residues leucine 56, glycine 85, and 104-109 (LSPLTL) each bind S-adenosyl-L-methionine.

The protein belongs to the RNA methyltransferase RlmH family. As to quaternary structure, homodimer.

It localises to the cytoplasm. It catalyses the reaction pseudouridine(1915) in 23S rRNA + S-adenosyl-L-methionine = N(3)-methylpseudouridine(1915) in 23S rRNA + S-adenosyl-L-homocysteine + H(+). Specifically methylates the pseudouridine at position 1915 (m3Psi1915) in 23S rRNA. This chain is Ribosomal RNA large subunit methyltransferase H, found in Thermus thermophilus (strain ATCC 27634 / DSM 579 / HB8).